The chain runs to 283 residues: Gap junction beta-1 protein (283 aa).

The Cytoplasmic segment spans residues 1–22 (MNWTGLYTLLSGVNRHSTAIGR). Residues 23–45 (VWLSVIFIFRIMVLVVAAESVWG) traverse the membrane as a helical segment. The Extracellular portion of the chain corresponds to 46–75 (DEKSSFICNTLQPGCNSVCYDHFFPISHVR). The chain crosses the membrane as a helical span at residues 76–95 (LWSLQLILVSTPALLVAMHV). At 96 to 130 (AHQQHIEKKMLRLEGHGDPIHLEEVKRHKVHISGT) the chain is on the cytoplasmic side. A helical transmembrane segment spans residues 131–153 (LWWTYVISVVFRLLFEAAFMYVF). Topologically, residues 154–191 (YLLYPGYAMVRLVKCDAYPCPNTVDCFVSRPTEKTVFT) are extracellular. A helical membrane pass occupies residues 192-214 (VFMLAASGICIILNVAEVVYLIV). Residues 215 to 283 (RACARRAQRR…AEKSDRCSAC (69 aa)) lie on the Cytoplasmic side of the membrane. 4 positions are modified to phosphoserine: S233, S258, S266, and S277.

It belongs to the connexin family. Beta-type (group I) subfamily. As to quaternary structure, a connexon is composed of a hexamer of connexins. Interacts with CNST.

Its subcellular location is the cell membrane. The protein localises to the cell junction. The protein resides in the gap junction. In terms of biological role, one gap junction consists of a cluster of closely packed pairs of transmembrane channels, the connexons, through which materials of low MW diffuse from one cell to a neighboring cell. The sequence is that of Gap junction beta-1 protein (GJB1) from Equus caballus (Horse).